The chain runs to 819 residues: Sulfate permease 2 (819 aa).

An N-linked (GlcNAc...) asparagine glycan is attached at asparagine 24. 10 helical membrane-spanning segments follow: residues 72–92, 104–124, 129–149, 172–192, 194–214, 273–293, 328–348, 365–385, 454–474, and 477–497; these read YNLT…FVVV, LAPE…WAFA, ITIG…ANVQ, LLFL…IVAI, AFMT…LMGI, FFVS…VSWL, ILSA…IEHI, SQEL…GGYP, FWLT…VSIF, and IENG…WRIA. The region spanning 551 to 708 is the STAS domain; sequence ELQISTPWPG…ENHKGGVQEV (158 aa). N-linked (GlcNAc...) asparagine glycosylation occurs at asparagine 581. Residues 726–766 are disordered; that stretch reads EAVPVGTSGSGSTDEKRPEGEGGATNGGMEKGSANGEDIST. A compositionally biased stretch (gly residues) spans 746–755; sequence EGGATNGGME.

The protein belongs to the SLC26A/SulP transporter (TC 2.A.53) family. In terms of tissue distribution, mainly found in mycelia.

Its subcellular location is the membrane. Uptake of sulfate into the cell. In Neurospora crassa (strain ATCC 24698 / 74-OR23-1A / CBS 708.71 / DSM 1257 / FGSC 987), this protein is Sulfate permease 2 (cys-14).